The chain runs to 258 residues: Granzyme K (258 aa).

A signal peptide spans 1–23 (MSFSSSALVFLVAGIYMSSESFH). The propeptide at 24 to 25 (TE) is activation peptide. Residues 26 to 253 (IIGGREVQPH…YQTWIKSKLA (228 aa)) enclose the Peptidase S1 domain. An intrachain disulfide couples C51 to C67. Active-site charge relay system residues include H66 and D110. 3 cysteine pairs are disulfide-bonded: C143–C214, C175–C193, and C204–C228. S208 acts as the Charge relay system in catalysis.

The protein belongs to the peptidase S1 family. Granzyme subfamily. Speen, lungs and liver non-parenchymal cells.

Its subcellular location is the cytoplasmic granule. The chain is Granzyme K (Gzmk) from Rattus norvegicus (Rat).